The following is a 103-amino-acid chain: Small ribosomal subunit protein uS10 (103 aa).

This sequence belongs to the universal ribosomal protein uS10 family. Part of the 30S ribosomal subunit.

Its function is as follows. Involved in the binding of tRNA to the ribosomes. This is Small ribosomal subunit protein uS10 from Borrelia recurrentis (strain A1).